The sequence spans 430 residues: Serine hydroxymethyltransferase (430 aa).

Residues Leu123 and 127-129 contribute to the (6S)-5,6,7,8-tetrahydrofolate site; that span reads GHL. Lys232 carries the post-translational modification N6-(pyridoxal phosphate)lysine. Glu248 contacts (6S)-5,6,7,8-tetrahydrofolate.

It belongs to the SHMT family. In terms of assembly, homodimer. Pyridoxal 5'-phosphate is required as a cofactor.

It is found in the cytoplasm. The enzyme catalyses (6R)-5,10-methylene-5,6,7,8-tetrahydrofolate + glycine + H2O = (6S)-5,6,7,8-tetrahydrofolate + L-serine. Its pathway is one-carbon metabolism; tetrahydrofolate interconversion. The protein operates within amino-acid biosynthesis; glycine biosynthesis; glycine from L-serine: step 1/1. Its function is as follows. Catalyzes the reversible interconversion of serine and glycine with tetrahydrofolate (THF) serving as the one-carbon carrier. This reaction serves as the major source of one-carbon groups required for the biosynthesis of purines, thymidylate, methionine, and other important biomolecules. Also exhibits THF-independent aldolase activity toward beta-hydroxyamino acids, producing glycine and aldehydes, via a retro-aldol mechanism. The sequence is that of Serine hydroxymethyltransferase from Anaplasma marginale (strain St. Maries).